The following is a 447-amino-acid chain: GTPase Der (447 aa).

2 consecutive EngA-type G domains span residues 4–165 (QIIT…PEEE) and 180–357 (LQIV…KIWN). Residues 10–17 (GRPNVGKS), 57–61 (DTPGL), 119–122 (NKCE), 186–193 (GRPNAGKS), 233–237 (DTAGL), and 298–301 (NKWD) each bind GTP. One can recognise a KH-like domain in the interval 358–443 (KKITTSKLNE…PIRFTYVKTK (86 aa)).

The protein belongs to the TRAFAC class TrmE-Era-EngA-EngB-Septin-like GTPase superfamily. EngA (Der) GTPase family. Associates with the 50S ribosomal subunit.

GTPase that plays an essential role in the late steps of ribosome biogenesis. The sequence is that of GTPase Der from Rickettsia rickettsii (strain Sheila Smith).